Consider the following 741-residue polypeptide: Protein ACCUMULATION AND REPLICATION OF CHLOROPLASTS 3, chloroplastic (741 aa).

The transit peptide at M1–N41 directs the protein to the chloroplast. Disordered regions lie at residues E444–D465 and D539–T558. The span at Y451–D465 shows a compositional bias: basic and acidic residues. Positions F546–T558 are enriched in polar residues. 3 MORN repeats span residues Q612–S628, Y630–V652, and F653–R675.

In terms of assembly, self-interacts. Interacts with FTSZ, CDP1/PARC6 (via N-terminus), MIND1 and MINE1. Part of a complex made of ARC3, ARC6, FTSZ1 and FTSZ2. Recruited to the middle of the plastid by CDP1/PARC6 where subsequent complex made of CDP1/PARC6, ARC3 and FtsZ proteins can form; this complex enhances the dynamics of Z rings during chloroplast division. Binding to FTSZ2-1 is enabled by ARC6.

It is found in the plastid. The protein localises to the chloroplast outer membrane. It localises to the chloroplast stroma. Together with MIND1 and MCD1, regulates FtsZ ring positioning in chloroplasts in an ARC6-dependent manner. Z-ring accessory protein involved in the initiation of plastid division and division site placement (might functionally replace bacterial MinC). Acts as a disassembly factor that accelerates fragmentation and depolymerization of existing FtsZ2 filaments by enhancing FTSZ2 GTPase activity, thus leading to the conversion of FTSZ2 bound GTP into GDP, a process which triggers FtsZ2 filaments destabilization. Prevents misplaced Z-ring formation at chloroplast stroma nondivision sites. May control the rate of chloroplast expansion. Seems to influence stromule (stroma-filled tubular extensions of the plastid envelope membrane) length and frequency. The polypeptide is Protein ACCUMULATION AND REPLICATION OF CHLOROPLASTS 3, chloroplastic (Arabidopsis thaliana (Mouse-ear cress)).